The sequence spans 162 residues: MSSSNIQRPKILSTLPSIFSYLHDAKVRSKMTFADIAAEMDRDEWYVAAIFYGQAKPDQADIVKLSAALNLQQRYLDEAFGPDFFPHRGLGEFPPQDPVLYRLYEVLVVYGYPLKHMIHEKFGDGIMSAIDFEGHVEKVKGSSNEDRVKITLNGKFLPYRRW.

Catalysis depends on residues arginine 102, glutamate 105, and serine 128.

It belongs to the cyanase family.

It carries out the reaction cyanate + hydrogencarbonate + 3 H(+) = NH4(+) + 2 CO2. Functionally, catalyzes the reaction of cyanate with bicarbonate to produce ammonia and carbon dioxide. This is Cyanate hydratase from Mycosarcoma maydis (Corn smut fungus).